Reading from the N-terminus, the 652-residue chain is MSLYNFKKIMVVPPAKDFIDIMLSKTQRKTPTVVHKGYKISRIRAFYTRKVKYTQQNFHDRLSQIIQDFPKLDDVHPFYADLMNVLYDKDHYKLALGQLNTARHLVDNVAKDYVRLLKYGDSLYRCKQLKKAALGRMATIMKRQASNLTYLEQVRQHLSRLPTIDPYSRTIIICGFPNVGKSSFINKITRADVEVQPYAFTTKSLYVGHTDYKYLRWQVIDTPGILDHPLEERNVIEMQAITALAHLRACVLYFMDISEQCGHSLEEQVKLFESIKPLFTNKPLILAINKIDILTPEDLPEERRAIITKLQEDKNIPVMLMSTVQETGVMEVKTEACERLLSYRVDQKMRTKKVDNILNRLHVAMPAPRDDKLRAPCIPEKASARLLQNADKAERKRKLEKEIEEEMGDDYTLDLKKNYSEIPEEERYDIIPEFWQGHNIADYIDADIFDKLEELEREEGLREESGVYKVPDMTMDETLKEIREIAKQIRGKRFELRDEKRLSSRKNKPVIPRNKQPKVRDRSVQKLVSTMEGLGVDMSGSENANFTKSVVDLRRGQVAVGSKKVPMQPLLDKESSAVVRKTGQPLKRAPSRDTLGIKNLAIRKKAQIMAKRDIAKKVTSRGLKGEADRFIGTKMPKHLFSGKRGNGKTDRR.

One can recognise an OBG-type G domain in the interval 169–341; that stretch reads RTIIICGFPN…VKTEACERLL (173 aa). GTP is bound by residues 175-182, 221-225, and 289-292; these read GFPNVGKS, DTPGI, and NKID. A disordered region spans residues 501–521; it reads RLSSRKNKPVIPRNKQPKVRD.

It belongs to the TRAFAC class OBG-HflX-like GTPase superfamily. OBG GTPase family. NOG subfamily.

The protein localises to the nucleus. It localises to the nucleolus. Its function is as follows. Involved in the biogenesis of the 60S ribosomal subunit. Required for normal assembly of the mitotic spindle. May be involved in both centrosome-dependent and centrosome-independent spindle assembly programs. Acts as a TP53 repressor, preventing TP53 stabilization and cell cycle arrest. In Drosophila melanogaster (Fruit fly), this protein is Nucleolar GTP-binding protein 1.